Reading from the N-terminus, the 250-residue chain is tRNA-specific adenosine deaminase subunit TAD2 (250 aa).

Positions methionine 1–leucine 119 constitute a CMP/dCMP-type deaminase domain. A Zn(2+)-binding site is contributed by histidine 54. Glutamate 56 acts as the Proton donor in catalysis. Zn(2+)-binding residues include cysteine 88 and cysteine 91.

Belongs to the cytidine and deoxycytidylate deaminase family. ADAT2 subfamily. Heterodimer with TAD3. Zn(2+) serves as cofactor.

It localises to the cytoplasm. Its subcellular location is the nucleus. It catalyses the reaction adenosine(34) in tRNA + H2O + H(+) = inosine(34) in tRNA + NH4(+). Functionally, structural subunit of tRNA-specific adenosine deaminase, which deaminates adenosine-34 (the first, also called wobble position of the anticodon) to inosine in many tRNAs. Inosine-34 allows the decoding of 3 different nucleotides at the third position of mRNA codons, as inosine is able to pair with U, C, and A. The polypeptide is tRNA-specific adenosine deaminase subunit TAD2 (TAD2) (Saccharomyces cerevisiae (strain ATCC 204508 / S288c) (Baker's yeast)).